Here is a 137-residue protein sequence, read N- to C-terminus: ATP synthase epsilon chain (137 aa).

It belongs to the ATPase epsilon chain family. F-type ATPases have 2 components, CF(1) - the catalytic core - and CF(0) - the membrane proton channel. CF(1) has five subunits: alpha(3), beta(3), gamma(1), delta(1), epsilon(1). CF(0) has three main subunits: a, b and c.

It is found in the cell inner membrane. Its function is as follows. Produces ATP from ADP in the presence of a proton gradient across the membrane. The protein is ATP synthase epsilon chain of Ruegeria sp. (strain TM1040) (Silicibacter sp.).